Consider the following 329-residue polypeptide: Sex comb on midleg-like protein 1 (329 aa).

2 positions are modified to phosphoserine: S138 and S238. The SAM domain maps to 258 to 325 (WSVEAVVLFL…YYIDRLKQGK (68 aa)).

The protein belongs to the SCM family.

The protein localises to the nucleus. Functionally, putative Polycomb group (PcG) protein. PcG proteins act by forming multiprotein complexes, which are required to maintain the transcriptionally repressive state of homeotic genes throughout development. May be involved in spermatogenesis during sexual maturation. The sequence is that of Sex comb on midleg-like protein 1 (SCML1) from Nomascus leucogenys (Northern white-cheeked gibbon).